The primary structure comprises 323 residues: Cytochrome c biogenesis protein CcsA (323 aa).

The next 8 membrane-spanning stretches (helical) occupy residues V17–F37, G44–G64, F68–V88, L98–L118, M143–I163, I229–N249, E262–R279, and I291–G311.

The protein belongs to the CcmF/CycK/Ccl1/NrfE/CcsA family. In terms of assembly, may interact with Ccs1.

It is found in the plastid. Its subcellular location is the chloroplast thylakoid membrane. Its function is as follows. Required during biogenesis of c-type cytochromes (cytochrome c6 and cytochrome f) at the step of heme attachment. This Lotus japonicus (Lotus corniculatus var. japonicus) protein is Cytochrome c biogenesis protein CcsA.